A 248-amino-acid chain; its full sequence is DNA polymerase sliding clamp (248 aa).

It belongs to the PCNA family. Homotrimer. The subunits circularize to form a toroid; DNA passes through its center. Replication factor C (RFC) is required to load the toroid on the DNA.

Functionally, sliding clamp subunit that acts as a moving platform for DNA processing. Responsible for tethering the catalytic subunit of DNA polymerase and other proteins to DNA during high-speed replication. This is DNA polymerase sliding clamp from Nitrosopumilus maritimus (strain SCM1).